The chain runs to 386 residues: Patatin-2-Kuras 3 (386 aa).

The signal sequence occupies residues 1–23 (MATTKSVLVLFFMILATTSSTCA). Residues 32 to 229 (LSIDGGGIKG…TVGDPALLSL (198 aa)) enclose the PNPLA domain. The short motif at 36–41 (GGGIKG) is the GXGXXG element. The short motif at 75 to 79 (GTSTG) is the GXSXG element. Residue Ser-77 is the Nucleophile of the active site. N-linked (GlcNAc...) asparagine glycosylation occurs at Asn-115. Asp-215 (proton acceptor) is an active-site residue. The short motif at 215 to 217 (DGA) is the DGA/G element. A coiled-coil region spans residues 321–384 (ENALTGTTTE…DRKKLRANKA (64 aa)).

This sequence belongs to the patatin family. In terms of tissue distribution, tuber.

It is found in the vacuole. Probable lipolytic acyl hydrolase (LAH), an activity which is thought to be involved in the response of tubers to pathogens. The protein is Patatin-2-Kuras 3 (pat2-k3) of Solanum tuberosum (Potato).